A 252-amino-acid polypeptide reads, in one-letter code: 5-oxoprolinase subunit A (252 aa).

Belongs to the LamB/PxpA family. In terms of assembly, forms a complex composed of PxpA, PxpB and PxpC.

The catalysed reaction is 5-oxo-L-proline + ATP + 2 H2O = L-glutamate + ADP + phosphate + H(+). Catalyzes the cleavage of 5-oxoproline to form L-glutamate coupled to the hydrolysis of ATP to ADP and inorganic phosphate. The sequence is that of 5-oxoprolinase subunit A from Corynebacterium glutamicum (strain R).